Here is a 286-residue protein sequence, read N- to C-terminus: Deleted in azoospermia-like (286 aa).

Residues 30–105 (NTVFVGGIDI…KKLKLGPAIR (76 aa)) enclose the RRM domain. In terms of domain architecture, DAZ spans 155 to 180 (ACPYPSSPPMAIQQIPVGCQQPSYFQ).

Belongs to the RRM DAZ family. In terms of assembly, interacts with the C-terminus of pabp1 and with epabp. Prior to oocyte maturation, found in a complex with epabp and pum2 proteins and spdy1 mRNA; pum2 dissociates from the complex during maturation. In terms of tissue distribution, germ-line specific; expressed in adult testis and ovary. Localized specifically to the oocyte and embryonic germ plasm and to migrating primordial germ cells (PGCs).

It is found in the cytoplasm. In terms of biological role, RNA-binding protein that is required for primordial germ cell (PGC) differentiation and indirectly necessary for the migration of PGCs through the endoderm. May promote meiotic cell division during spermatogenesis. Shows a preference for G- and U-rich RNAs and probably binds the 3'-UTR of target mRNAs. Stimulates the initiation of translation of mRNAs through the recruitment of poly(A)-binding proteins (PABPs). This is Deleted in azoospermia-like from Xenopus tropicalis (Western clawed frog).